A 424-amino-acid chain; its full sequence is Glutamate-1-semialdehyde 2,1-aminomutase (424 aa).

Lysine 263 is subject to N6-(pyridoxal phosphate)lysine.

Belongs to the class-III pyridoxal-phosphate-dependent aminotransferase family. HemL subfamily. Homodimer. Requires pyridoxal 5'-phosphate as cofactor.

It localises to the cytoplasm. It carries out the reaction (S)-4-amino-5-oxopentanoate = 5-aminolevulinate. It participates in porphyrin-containing compound metabolism; protoporphyrin-IX biosynthesis; 5-aminolevulinate from L-glutamyl-tRNA(Glu): step 2/2. This Campylobacter jejuni (strain RM1221) protein is Glutamate-1-semialdehyde 2,1-aminomutase.